We begin with the raw amino-acid sequence, 1220 residues long: Pesticidal crystal protein Cry5Ac (1220 aa).

The interval 1194–1220 is disordered; it reads PLPTDDQNSEGNTAFSTNSDTSMNNNQ. A compositionally biased stretch (polar residues) spans 1198 to 1220; sequence DDQNSEGNTAFSTNSDTSMNNNQ.

The protein belongs to the delta endotoxin family.

Promotes colloidosmotic lysis by binding to the midgut epithelial cells of hymenopteran species. This Bacillus thuringiensis protein is Pesticidal crystal protein Cry5Ac (cry5Ac).